A 439-amino-acid chain; its full sequence is RNA polymerase II-associated protein RBA50 (439 aa).

Disordered regions lie at residues 1–35 (MDLL…GFPE) and 49–79 (LREK…SEAK). The segment covering 15-30 (SVESNDNGTLSTNNCG) has biased composition (polar residues).

This sequence belongs to the RPAP1 family.

The protein localises to the cytoplasm. Forms an interface between the RNA polymerase II enzyme and chaperone/scaffolding proteins, suggesting that it is required to connect RNA polymerase II to regulators of protein complex formation. The chain is RNA polymerase II-associated protein RBA50 (RBA50) from Saccharomyces cerevisiae (strain ATCC 204508 / S288c) (Baker's yeast).